The primary structure comprises 1342 residues: ATP-dependent RNA helicase TDRD9 (1342 aa).

A compositionally biased stretch (basic and acidic residues) spans 31 to 63 (KAEAEDNATEVRSDKAFSELSSPEKEKSDDGNQ). Residues 31 to 81 (KAEAEDNATEVRSDKAFSELSSPEKEKSDDGNQRRKRAQLPTGPGTSPPSL) are disordered. The Helicase ATP-binding domain maps to 99-265 (VSLIENNSVV…FGSPIRNQMN (167 aa)). Residue 112–119 (GATGSGKT) coordinates ATP. A DEAH box motif is present at residues 211-214 (DEVH). Residues 317-503 (SLIQSFDEME…LLKVKLLDMG (187 aa)) enclose the Helicase C-terminal domain. In terms of domain architecture, Tudor spans 901–962 (SLYPNLLCVA…RELPSDLMTP (62 aa)).

The protein belongs to the DEAD box helicase family. DEAH subfamily.

The protein localises to the cytoplasm. Its subcellular location is the nucleus. It catalyses the reaction ATP + H2O = ADP + phosphate + H(+). In terms of biological role, ATP-binding RNA helicase which plays a central role during spermatogenesis by repressing transposable elements and preventing their mobilization, which is essential for the germline integrity. Acts via the piRNA metabolic process, which mediates the repression of transposable elements during meiosis by forming complexes composed of piRNAs and Piwi proteins and governs the methylation and subsequent repression of transposons. Acts downstream of piRNA biogenesis: exclusively required for transposon silencing in the nucleus, suggesting that it acts as a nuclear effector in the nucleus together with piwil4. This is ATP-dependent RNA helicase TDRD9 from Danio rerio (Zebrafish).